A 217-amino-acid polypeptide reads, in one-letter code: Membrane-associated progesterone receptor component 2 (217 aa).

O-linked (Xyl...) (chondroitin sulfate) serine glycosylation occurs at Ser-15. A helical transmembrane segment spans residues 40–62; sequence ALLATGGEMLLNVALVALVLLGA. Residues Ser-84, Ser-98, and Ser-202 each carry the phosphoserine modification. One can recognise a Cytochrome b5 heme-binding domain in the interval 96–195; it reads DFSLEQLRQY…EKYDYVGRLL (100 aa). Residues 196 to 217 form a disordered region; that stretch reads KPGEEPSEYTDEEDTKDHSKQD. The span at 200–209 shows a compositional bias: acidic residues; the sequence is EPSEYTDEED. A Phosphotyrosine modification is found at Tyr-204. Thr-205 is subject to Phosphothreonine.

The protein belongs to the cytochrome b5 family. MAPR subfamily. In terms of assembly, interacts with PGRMC1. Interacts with AAAS. As to expression, expressed in brown adipose tissue, white adipose tissue, liver, heart, skeletal muscle, brain and adrenal gland.

The protein resides in the membrane. The protein localises to the nucleus envelope. It localises to the endoplasmic reticulum. Its subcellular location is the secreted. Its function is as follows. Required for the maintenance of uterine histoarchitecture and normal female reproductive lifespan. May serve as a universal non-classical progesterone receptor in the uterus. Intracellular heme chaperone required for delivery of labile, or signaling heme, to the nucleus. Plays a role in adipocyte function and systemic glucose homeostasis. In brown fat, which has a high demand for heme, delivery of labile heme in the nucleus regulates the activity of heme-responsive transcriptional repressors such as NR1D1 and BACH1. This chain is Membrane-associated progesterone receptor component 2, found in Mus musculus (Mouse).